A 211-amino-acid chain; its full sequence is Large ribosomal subunit protein uL3 (211 aa).

Gln-150 bears the N5-methylglutamine mark.

Belongs to the universal ribosomal protein uL3 family. As to quaternary structure, part of the 50S ribosomal subunit. Forms a cluster with proteins L14 and L19. In terms of processing, methylated by PrmB.

Functionally, one of the primary rRNA binding proteins, it binds directly near the 3'-end of the 23S rRNA, where it nucleates assembly of the 50S subunit. The polypeptide is Large ribosomal subunit protein uL3 (Pseudomonas savastanoi pv. phaseolicola (strain 1448A / Race 6) (Pseudomonas syringae pv. phaseolicola (strain 1448A / Race 6))).